The following is a 647-amino-acid chain: MSCGDSGIRRILRASKRFRSTKGASKARRDQMNSEIRNLRALLPISPEHRLSYLHSMSITCTYIRKSVELRGVCEESTVFSAVNGCVPQDCALQDCALQECVLQECVLQECVLQECVLQALPGFIVAFTTDGKLLYVSENVHEYLGLSMVDVLQSDSFFDMLDRSDVEAVRSVLADASPSGERWVVCRMLVSKAMRLRSSCCPLLVRIRLRDGVCVSLCRPTADRLPARNADFHTHHSADMRLASASSSVLFHLGFSADELIGRSWYELLHPDDLRHAADRHAAILAAATADAEMLIRVQCKDLSWVWMYTHASATAERDAISCSNYMISEAEAVYLQQRLSSSSSSSSSSSSSSASPQCSSVSDSSDAHSAHTLFCTPPYSPTSSQCSDFLSEGYGSLEALVDSAFCSPPYPPLFPNPCCTPTVCPPDTALDPARLCPPDSALVPAALCPPDAALDPTQLCPPGAALDPTLLCPPGAALDPTQLCLPDGALVPAVFCPPNGALVPARLCPSDAALVPAALGRPDAALVPVCRPLQVCECPLDGAVPLEDLSMFPLPQGGGSRLMPPEASPTTHTHFSYDAAQQAGIGTLAMQIHTLICSFDAYSAARHTHSHHTSCWAPEPLLDEGIIDSILRELDSTHTDAHTLI.

The tract at residues 16 to 29 (KRFRSTKGASKARR) is basic motif; degenerate. In terms of domain architecture, bHLH spans 16–67 (KRFRSTKGASKARRDQMNSEIRNLRALLPISPEHRLSYLHSMSITCTYIRKS). The helix-loop-helix motif stretch occupies residues 30 to 67 (DQMNSEIRNLRALLPISPEHRLSYLHSMSITCTYIRKS). PAS domains are found at residues 117–181 (VLQA…SPSG) and 238–274 (SADM…HPDD).

In terms of assembly, heterodimer; efficient DNA binding requires dimerization with another bHLH protein. In terms of tissue distribution, specifically expressed in endothelial and hematopoietic precursor cells.

The protein localises to the nucleus. Its function is as follows. Transcription factor specifically expressed in endothelial and hematopoietic precursor cells that acts as a key regulator of the endothelial differentiation cascade. Acts as an early-response transcription factor that regulates the expression of early regulators of endothelial and haematopoietic differentiation, such as etv2 and tal1. This chain is Neuronal PAS domain-containing protein 4-like, found in Danio rerio (Zebrafish).